Reading from the N-terminus, the 152-residue chain is 3-hydroxyacyl-[acyl-carrier-protein] dehydratase FabZ (152 aa).

Residue histidine 57 is part of the active site.

Belongs to the thioester dehydratase family. FabZ subfamily.

It is found in the cytoplasm. The enzyme catalyses a (3R)-hydroxyacyl-[ACP] = a (2E)-enoyl-[ACP] + H2O. Involved in unsaturated fatty acids biosynthesis. Catalyzes the dehydration of short chain beta-hydroxyacyl-ACPs and long chain saturated and unsaturated beta-hydroxyacyl-ACPs. The chain is 3-hydroxyacyl-[acyl-carrier-protein] dehydratase FabZ from Bradyrhizobium sp. (strain BTAi1 / ATCC BAA-1182).